Here is a 571-residue protein sequence, read N- to C-terminus: Glutamine--tRNA ligase (571 aa).

Residues 35–45 carry the 'HIGH' region motif; it reads PEPNGYLHIGH. ATP contacts are provided by residues 36–38 and 42–48; these read EPN and HIGHAKS. The L-glutamine site is built by Asp-68 and Tyr-213. ATP contacts are provided by residues Thr-232, 262–263, and 270–272; these read RL and LSK. The 'KMSKS' region motif lies at 269 to 273; it reads ILSKR.

The protein belongs to the class-I aminoacyl-tRNA synthetase family. As to quaternary structure, monomer.

It is found in the cytoplasm. It catalyses the reaction tRNA(Gln) + L-glutamine + ATP = L-glutaminyl-tRNA(Gln) + AMP + diphosphate. This chain is Glutamine--tRNA ligase, found in Buchnera aphidicola subsp. Acyrthosiphon pisum (strain APS) (Acyrthosiphon pisum symbiotic bacterium).